The primary structure comprises 449 residues: MGKLFGTDGVRGIANRDLTPELAYQLGRIGAYVLNKDNNKRAKVAIGKDTRISGDLLESAMTAGFLSMGVDVISLGVLPTPAVAYLTRHLKADFGVVISASHNPAEYNGIKFFNREGYKLPDEVEEQIEAYILNNRDVDIRMEGKDVGTVTVDEKSIEEYTDFLKTTLDRDFKGLKIAVDAGNGAAYRSAPKLLKELGAEVILINDTPDGMNINKGCGSTNPEVIGALVKEVGADIGISFDGDADRLIAVDENGEVVDGDHIMAICGICLKKQGKLKNDVIVGTVMSNIGLEIAMKEYGCNVVKTKVGDRYVLEEMVQGGYCLGGEQSGHVIFLDYNTTGDGLLTAIQLIATMKAENKKLSELAKVMTSYPQVLVNAKVKNENKEVYQNDAIIMQSITAIENKLAGEGRVLIRPSGTEPLVRVMLEGKNQEELNVLATDLAKLIEQRLN.

The active-site Phosphoserine intermediate is the serine 101. Positions 101, 241, 243, and 245 each coordinate Mg(2+). Serine 101 is subject to Phosphoserine.

This sequence belongs to the phosphohexose mutase family. Mg(2+) is required as a cofactor. In terms of processing, activated by phosphorylation.

It carries out the reaction alpha-D-glucosamine 1-phosphate = D-glucosamine 6-phosphate. Its function is as follows. Catalyzes the conversion of glucosamine-6-phosphate to glucosamine-1-phosphate. The polypeptide is Phosphoglucosamine mutase (Alkaliphilus oremlandii (strain OhILAs) (Clostridium oremlandii (strain OhILAs))).